We begin with the raw amino-acid sequence, 718 residues long: K(+)-insensitive pyrophosphate-energized proton pump (718 aa).

Helical transmembrane passes span 6–26 (AVLV…IWAI), 61–81 (IAIV…LNAA), 83–103 (GFLI…HVSV), 112–132 (AASL…AITG), 133–153 (LLVA…LTVW), and 168–188 (VSLG…GGIF). Lysine 190 is a binding site for substrate. Residues aspartate 193, aspartate 197, asparagine 220, and aspartate 223 each contribute to the Mg(2+) site. The next 6 membrane-spanning stretches (helical) occupy residues 235 to 255 (LFET…IFFH), 265 to 285 (LYPL…TFFV), 300 to 320 (GLIA…TLTV), 335 to 355 (GTNL…IVVI), 385 to 405 (GLAV…GGII), and 413 to 433 (LFGT…IVAL). Aspartate 441 lines the Mg(2+) pocket. 4 helical membrane-spanning segments follow: residues 472-492 (AVTK…LFAA), 524-544 (YVVA…GMAM), 593-613 (IIPS…VLLI), and 620-640 (AFAA…FVAI). Ca(2+) is bound by residues aspartate 650, aspartate 682, and aspartate 686. Lysine 689 contributes to the substrate binding site. Residues 695–715 (AVNPAIKITNIVALLLLAVLA) form a helical membrane-spanning segment.

It belongs to the H(+)-translocating pyrophosphatase (TC 3.A.10) family. K(+)-insensitive subfamily. In terms of assembly, homodimer. Mg(2+) is required as a cofactor.

It is found in the cell inner membrane. It carries out the reaction diphosphate + H2O + H(+)(in) = 2 phosphate + 2 H(+)(out). Functionally, proton pump that utilizes the energy of pyrophosphate hydrolysis as the driving force for proton movement across the membrane. Generates a proton motive force. The polypeptide is K(+)-insensitive pyrophosphate-energized proton pump (Brucella melitensis biotype 1 (strain ATCC 23456 / CCUG 17765 / NCTC 10094 / 16M)).